Consider the following 508-residue polypeptide: Light-independent protochlorophyllide reductase subunit B (508 aa).

Asp-36 contacts [4Fe-4S] cluster. The active-site Proton donor is Asp-294. Residue Gly-429 to Met-430 coordinates substrate.

Belongs to the ChlB/BchB/BchZ family. Protochlorophyllide reductase is composed of three subunits; ChlL, ChlN and ChlB. Forms a heterotetramer of two ChlB and two ChlN subunits. Requires [4Fe-4S] cluster as cofactor.

It carries out the reaction chlorophyllide a + oxidized 2[4Fe-4S]-[ferredoxin] + 2 ADP + 2 phosphate = protochlorophyllide a + reduced 2[4Fe-4S]-[ferredoxin] + 2 ATP + 2 H2O. It functions in the pathway porphyrin-containing compound metabolism; chlorophyll biosynthesis (light-independent). Its function is as follows. Component of the dark-operative protochlorophyllide reductase (DPOR) that uses Mg-ATP and reduced ferredoxin to reduce ring D of protochlorophyllide (Pchlide) to form chlorophyllide a (Chlide). This reaction is light-independent. The NB-protein (ChlN-ChlB) is the catalytic component of the complex. This is Light-independent protochlorophyllide reductase subunit B from Gloeothece citriformis (strain PCC 7424) (Cyanothece sp. (strain PCC 7424)).